A 74-amino-acid chain; its full sequence is MFLMYLLVQTTESSWLSKTYKKLENSAKKRISEGVAIAILGGLRHRRSVAHQEEASLHVKTDELPSPDTVREQL.

An N-terminal signal peptide occupies residues 1–13 (MFLMYLLVQTTES). Residues 45 to 74 (HRRSVAHQEEASLHVKTDELPSPDTVREQL) constitute a propeptide, removed in mature form. Residues 51–74 (HQEEASLHVKTDELPSPDTVREQL) are disordered.

Belongs to the cecropin family. Expressed in the body wall, intestine, uterus and ovary.

It localises to the secreted. Has antibacterial activity against several Gram-positive and Gram-negative bacteria. Is weakly active against yeasts. Acts by a nonpore mechanism. This is Cecropin-P4 (ASCEC-4) from Ascaris suum (Pig roundworm).